The sequence spans 682 residues: Potassium-transporting ATPase ATP-binding subunit (682 aa).

A run of 4 helical transmembrane segments spans residues 34–54 (PVMF…VAMA), 62–82 (AGFT…ANVA), 219–239 (IALT…TATL), and 254–274 (VLVA…LSAI). Asp-307 (4-aspartylphosphate intermediate) is an active-site residue. Residues Asp-344, Glu-348, 377–384 (FTAQTRMS), and Lys-395 each bind ATP. Mg(2+) is bound by residues Asp-518 and Asp-522. 3 consecutive transmembrane segments (helical) span residues 588 to 608 (FAII…LNVM), 616 to 636 (AILS…PLAL), and 662 to 682 (LVVP…FGLV).

This sequence belongs to the cation transport ATPase (P-type) (TC 3.A.3) family. Type IA subfamily. As to quaternary structure, the system is composed of three essential subunits: KdpA, KdpB and KdpC.

The protein resides in the cell inner membrane. The enzyme catalyses K(+)(out) + ATP + H2O = K(+)(in) + ADP + phosphate + H(+). Functionally, part of the high-affinity ATP-driven potassium transport (or Kdp) system, which catalyzes the hydrolysis of ATP coupled with the electrogenic transport of potassium into the cytoplasm. This subunit is responsible for energy coupling to the transport system and for the release of the potassium ions to the cytoplasm. The sequence is that of Potassium-transporting ATPase ATP-binding subunit from Enterobacter sp. (strain 638).